The sequence spans 500 residues: Aspartyl/glutamyl-tRNA(Asn/Gln) amidotransferase subunit B (500 aa).

Belongs to the GatB/GatE family. GatB subfamily. In terms of assembly, heterotrimer of A, B and C subunits.

It carries out the reaction L-glutamyl-tRNA(Gln) + L-glutamine + ATP + H2O = L-glutaminyl-tRNA(Gln) + L-glutamate + ADP + phosphate + H(+). It catalyses the reaction L-aspartyl-tRNA(Asn) + L-glutamine + ATP + H2O = L-asparaginyl-tRNA(Asn) + L-glutamate + ADP + phosphate + 2 H(+). Allows the formation of correctly charged Asn-tRNA(Asn) or Gln-tRNA(Gln) through the transamidation of misacylated Asp-tRNA(Asn) or Glu-tRNA(Gln) in organisms which lack either or both of asparaginyl-tRNA or glutaminyl-tRNA synthetases. The reaction takes place in the presence of glutamine and ATP through an activated phospho-Asp-tRNA(Asn) or phospho-Glu-tRNA(Gln). This is Aspartyl/glutamyl-tRNA(Asn/Gln) amidotransferase subunit B from Rhizobium meliloti (strain 1021) (Ensifer meliloti).